Consider the following 403-residue polypeptide: Phosphoserine phosphatase RsbP (403 aa).

Residues 1-42 form the PAS domain; that stretch reads MDKQLNDAPCGFLALSEEGSIIAANRTLIKILDYEPEQVIGQ. The region spanning 191–402 is the PPM-type phosphatase domain; the sequence is QVQIDSYYNA…DDECFILVDV (212 aa).

Mn(2+) is required as a cofactor.

The catalysed reaction is O-phospho-L-serine + H2O = L-serine + phosphate. It carries out the reaction O-phospho-D-serine + H2O = D-serine + phosphate. Its function is as follows. Positive regulator of sigma-B activity. Dephosphorylates RsbV in response to energy stress. The sequence is that of Phosphoserine phosphatase RsbP (rsbP) from Bacillus subtilis (strain 168).